A 75-amino-acid chain; its full sequence is Large ribosomal subunit protein bL31 (75 aa).

The Zn(2+) site is built by Cys-16, Cys-18, Cys-38, and Cys-41.

It belongs to the bacterial ribosomal protein bL31 family. Type A subfamily. In terms of assembly, part of the 50S ribosomal subunit. Requires Zn(2+) as cofactor.

Binds the 23S rRNA. This is Large ribosomal subunit protein bL31 from Mycolicibacterium smegmatis (strain ATCC 700084 / mc(2)155) (Mycobacterium smegmatis).